The sequence spans 530 residues: Bifunctional purine biosynthesis protein PurH (530 aa).

Residues 1-148 (MNNARPIRRA…KNHKDVTIVV (148 aa)) form the MGS-like domain.

This sequence belongs to the PurH family.

It catalyses the reaction (6R)-10-formyltetrahydrofolate + 5-amino-1-(5-phospho-beta-D-ribosyl)imidazole-4-carboxamide = 5-formamido-1-(5-phospho-D-ribosyl)imidazole-4-carboxamide + (6S)-5,6,7,8-tetrahydrofolate. It carries out the reaction IMP + H2O = 5-formamido-1-(5-phospho-D-ribosyl)imidazole-4-carboxamide. Its pathway is purine metabolism; IMP biosynthesis via de novo pathway; 5-formamido-1-(5-phospho-D-ribosyl)imidazole-4-carboxamide from 5-amino-1-(5-phospho-D-ribosyl)imidazole-4-carboxamide (10-formyl THF route): step 1/1. The protein operates within purine metabolism; IMP biosynthesis via de novo pathway; IMP from 5-formamido-1-(5-phospho-D-ribosyl)imidazole-4-carboxamide: step 1/1. In Vibrio vulnificus (strain YJ016), this protein is Bifunctional purine biosynthesis protein PurH.